We begin with the raw amino-acid sequence, 186 residues long: Alkyl hydroperoxide reductase AhpD (186 aa).

C132 (proton donor) is an active-site residue. An intrachain disulfide couples C132 to C135. Catalysis depends on C135, which acts as the Cysteine sulfenic acid (-SOH) intermediate.

This sequence belongs to the AhpD family.

The catalysed reaction is N(6)-[(R)-dihydrolipoyl]-L-lysyl-[lipoyl-carrier protein] + a hydroperoxide = N(6)-[(R)-lipoyl]-L-lysyl-[lipoyl-carrier protein] + an alcohol + H2O. In terms of biological role, antioxidant protein with alkyl hydroperoxidase activity. Required for the reduction of the AhpC active site cysteine residues and for the regeneration of the AhpC enzyme activity. The polypeptide is Alkyl hydroperoxide reductase AhpD (Anaeromyxobacter sp. (strain K)).